The primary structure comprises 206 residues: MTDTAASTSQPALVRNELNLVWLDMEMTGLDPDNDRIIEIAVVVTNSTLDIAVEGPVFAIHQSDETLAKMDDWNKSTHGRSGLIDRVRASTVTEAEAAEQLQAFLAQYVSPGKSPMCGNSICQDRRFMARWMPEFERFFHYRNLDVSTLKELCRRWQPAIYKGFQKRAMHTALADIHESIDELKYYREHFLIPAASASAGESAPAA.

The Exonuclease domain occupies 20–183 (LVWLDMEMTG…ADIHESIDEL (164 aa)). Y141 is a catalytic residue.

Belongs to the oligoribonuclease family.

The protein localises to the cytoplasm. Functionally, 3'-to-5' exoribonuclease specific for small oligoribonucleotides. This chain is Oligoribonuclease, found in Burkholderia lata (strain ATCC 17760 / DSM 23089 / LMG 22485 / NCIMB 9086 / R18194 / 383).